The chain runs to 196 residues: UPF0134 protein MPN_501 (196 aa).

Belongs to the UPF0134 family.

The polypeptide is UPF0134 protein MPN_501 (Mycoplasma pneumoniae (strain ATCC 29342 / M129 / Subtype 1) (Mycoplasmoides pneumoniae)).